We begin with the raw amino-acid sequence, 176 residues long: MGSVNSRGHKAEAQVVMMGLDSAGKTTILYKLKGNQLVDTLPTVGFNVEPLEAPGHVSLTLWDIGGQTQLRATWKDYLEGIDLLVYVLDSTDEARLPEAVAELKEVLEDPNMAGVPFLVLANKQEAPGALPLLEIRNRLGLEGFQKHCWELRACSALTGQGLQEALQSLLHLLKSR.

The N-myristoyl glycine moiety is linked to residue glycine 2. GTP contacts are provided by residues 19-26, 63-67, and 122-125; these read GLDSAGKT, DIGGQ, and NKQE.

This sequence belongs to the small GTPase superfamily. Arf family.

In terms of biological role, may play a role in apoptosis. May act as a tumor suppressor. The chain is ADP-ribosylation factor-like protein 11 (Arl11) from Mus musculus (Mouse).